The chain runs to 389 residues: Protein IQ-domain 26 (389 aa).

IQ domains follow at residues 106–134 (ERWA…GLVK) and 135–157 (LQAL…SMQA). Residues 137 to 151 (ALVRGYLVRKRAAET) form a calmodulin-binding region. Positions 347–374 (SVSGVRMVQPQPQPQTQTQQQKRSPCSY) are disordered.

Belongs to the IQD family. In terms of assembly, binds to multiple calmodulin (CaM) in the presence of Ca(2+) and CaM-like proteins.

The protein localises to the cell membrane. It is found in the cytoplasm. Its subcellular location is the cytoskeleton. In terms of biological role, may be involved in cooperative interactions with calmodulins or calmodulin-like proteins. Recruits calmodulin proteins to microtubules, thus being a potential scaffold in cellular signaling and trafficking. May associate with nucleic acids and regulate gene expression at the transcriptional or post-transcriptional level. This chain is Protein IQ-domain 26, found in Arabidopsis thaliana (Mouse-ear cress).